Here is a 389-residue protein sequence, read N- to C-terminus: MFQISELANYRLCKRCSGRIFAYHYHGISNLERGEYLQFAIGCETGNPDFSFVDSKNCDICHGIFDRFDDIYDLVAKKVGDAQYSTFLVGSVFPQDTIRMEEDIQKKFGSSGESIKKEFNREFGKYFSARTGKEYSQDNPDLTILVNAEYLFVDVKIRSIYIYGKYRKFRRDMPQTRWIHRPNGDTVESVIGSVFTRYAGGTNYYLHGSGREDVDVRMLGNGREFVLEVENPRYREFELDPVVKEINTSGKGVEIFDVKFSSHDAVSEVKLEKHRKVYDALVVSDRPIDESRLLEACINLTGKNIYQRTPLRVAQRRSDLVRTRRIDQVDLVGVSANEAEILISAEAGTYIKELVNGDGGRTRPSLSEMYGSPLNVKELDVIKICRGED.

Aspartate 213 serves as the catalytic Nucleophile. Residues tyrosine 278 and tyrosine 350 each contribute to the substrate site.

This sequence belongs to the pseudouridine synthase Pus10 family.

It catalyses the reaction uridine(54) in tRNA = pseudouridine(54) in tRNA. The catalysed reaction is uridine(55) in tRNA = pseudouridine(55) in tRNA. Functionally, responsible for synthesis of pseudouridine from uracil-54 and uracil-55 in the psi GC loop of transfer RNAs. In Thermoplasma acidophilum (strain ATCC 25905 / DSM 1728 / JCM 9062 / NBRC 15155 / AMRC-C165), this protein is tRNA pseudouridine synthase Pus10.